A 594-amino-acid polypeptide reads, in one-letter code: Zinc finger protein 467 (594 aa).

The disordered stretch occupies residues 1–86 (MRETLEALNS…PQKAEPAGSV (86 aa)). The tract at residues 1 to 183 (MRETLEALNS…TLRLHQRLHR (183 aa)) is interaction with STAT3. Residues 31–47 (SNAQEKMSSRGESTLHS) show a composition bias toward polar residues. Basic and acidic residues predominate over residues 54-64 (PGQKEGIHTEQ). A Glycyl lysine isopeptide (Lys-Gly) (interchain with G-Cter in SUMO2) cross-link involves residue Lys97. C2H2-type zinc fingers lie at residues 160–182 (YGCE…QRLH), 188–210 (CACP…QRSH), 216–238 (FPCS…LRTH), 244–266 (YPCA…QKTH), 272–294 (FPCT…QRIH), 300–322 (YQCT…QRVH), 355–377 (FACS…QSLH), 430–452 (FFCP…RRVH), 458–480 (FACA…SRAH), 486–508 (FACA…QAVH), 514–536 (HACA…QAIH), and 542–564 (FSCP…QRIH). Positions 313–351 (QHLVRHQRVHDAASRTRSSPDIPVAPHSPTASLTPSPPG) are disordered. Lys368 is covalently cross-linked (Glycyl lysine isopeptide (Lys-Gly) (interchain with G-Cter in SUMO2)).

This sequence belongs to the krueppel C2H2-type zinc-finger protein family. In terms of assembly, interacts with STAT3. Enhances STAT3 activity by keeping it in the nucleus.

It is found in the nucleus. Its function is as follows. Transcription factor that promotes adipocyte differentiation and suppresses osteoblast differentiation in the bone marrow. Enhances the osteoclast-supporting ability of stromal cells. Binds with STAT3 the consensus sequence 5'-CTTCTGGGAAGA-3' of the acute phase response element (APRE). Transactivates several promoters including FOS, OSM and PPARG. Recruits a histone deacetylase complex. The polypeptide is Zinc finger protein 467 (Znf467) (Mus musculus (Mouse)).